The chain runs to 402 residues: DNA replication and repair protein RecF (402 aa).

An ATP-binding site is contributed by 30 to 37; that stretch reads GYNGIGKT.

The protein belongs to the RecF family.

The protein localises to the cytoplasm. In terms of biological role, the RecF protein is involved in DNA metabolism; it is required for DNA replication and normal SOS inducibility. RecF binds preferentially to single-stranded, linear DNA. It also seems to bind ATP. This chain is DNA replication and repair protein RecF, found in Pseudarthrobacter chlorophenolicus (strain ATCC 700700 / DSM 12829 / CIP 107037 / JCM 12360 / KCTC 9906 / NCIMB 13794 / A6) (Arthrobacter chlorophenolicus).